Consider the following 900-residue polypeptide: Alanine--tRNA ligase (900 aa).

His604, His608, Cys708, and His712 together coordinate Zn(2+).

Belongs to the class-II aminoacyl-tRNA synthetase family. Zn(2+) serves as cofactor.

It is found in the cytoplasm. The enzyme catalyses tRNA(Ala) + L-alanine + ATP = L-alanyl-tRNA(Ala) + AMP + diphosphate. In terms of biological role, catalyzes the attachment of alanine to tRNA(Ala) in a two-step reaction: alanine is first activated by ATP to form Ala-AMP and then transferred to the acceptor end of tRNA(Ala). Also edits incorrectly charged Ser-tRNA(Ala) and Gly-tRNA(Ala) via its editing domain. The polypeptide is Alanine--tRNA ligase (Saccharolobus islandicus (strain M.16.27) (Sulfolobus islandicus)).